The following is a 474-amino-acid chain: tRNA-2-methylthio-N(6)-dimethylallyladenosine synthase (474 aa).

One can recognise an MTTase N-terminal domain in the interval 3 to 120 (KKLHIKTWGC…LPEMIDQIRD (118 aa)). Positions 12, 49, 83, 157, 161, and 164 each coordinate [4Fe-4S] cluster. Residues 143 to 375 (RADGPSAFVS…QDRITQQAMR (233 aa)) enclose the Radical SAM core domain. Residues 378–441 (RQMLGTVQRI…TNSLRGTFVR (64 aa)) form the TRAM domain.

The protein belongs to the methylthiotransferase family. MiaB subfamily. In terms of assembly, monomer. The cofactor is [4Fe-4S] cluster.

The protein resides in the cytoplasm. The catalysed reaction is N(6)-dimethylallyladenosine(37) in tRNA + (sulfur carrier)-SH + AH2 + 2 S-adenosyl-L-methionine = 2-methylsulfanyl-N(6)-dimethylallyladenosine(37) in tRNA + (sulfur carrier)-H + 5'-deoxyadenosine + L-methionine + A + S-adenosyl-L-homocysteine + 2 H(+). In terms of biological role, catalyzes the methylthiolation of N6-(dimethylallyl)adenosine (i(6)A), leading to the formation of 2-methylthio-N6-(dimethylallyl)adenosine (ms(2)i(6)A) at position 37 in tRNAs that read codons beginning with uridine. This chain is tRNA-2-methylthio-N(6)-dimethylallyladenosine synthase, found in Shewanella sediminis (strain HAW-EB3).